Consider the following 141-residue polypeptide: MEDQQRLEEIVNQLNIYQSQVELIQQQMEAVRATISELEILEKTLSDIQGKDGSETLVPVGAGSFIKAELKDTSEVIMSVGAGVAIKKNFEDAMESIKSQKNELESTLQKMGENLRKITDIMMKLSPQAEELLKKVRGSGE.

Belongs to the prefoldin subunit alpha family. As to quaternary structure, heterohexamer of two alpha and four beta subunits.

It is found in the cytoplasm. Its function is as follows. Molecular chaperone capable of stabilizing a range of proteins. Seems to fulfill an ATP-independent, HSP70-like function in archaeal de novo protein folding. The chain is Prefoldin subunit alpha (pfdA) from Methanothermobacter thermautotrophicus (strain ATCC 29096 / DSM 1053 / JCM 10044 / NBRC 100330 / Delta H) (Methanobacterium thermoautotrophicum).